A 147-amino-acid chain; its full sequence is Lysozyme C (147 aa).

The first 17 residues, 1–17 (MRSLLILVLCFLPLAAP), serve as a signal peptide directing secretion. Positions 19-147 (KVYGRCELAA…VNVWIRGCRL (129 aa)) constitute a C-type lysozyme domain. 4 disulfide bridges follow: C24–C145, C48–C133, C82–C98, and C94–C112. Active-site residues include E53 and D70.

The protein belongs to the glycosyl hydrolase 22 family. As to quaternary structure, monomer. In terms of processing, by an evolutionary shift in the site of proteolytic cleavage of prelysozyme, Gly-18 became the N-terminal residue of the mature protein instead of being the C-terminal residue of the signal sequence as in other birds.

The protein localises to the secreted. It carries out the reaction Hydrolysis of (1-&gt;4)-beta-linkages between N-acetylmuramic acid and N-acetyl-D-glucosamine residues in a peptidoglycan and between N-acetyl-D-glucosamine residues in chitodextrins.. In terms of biological role, lysozymes have primarily a bacteriolytic function; those in tissues and body fluids are associated with the monocyte-macrophage system and enhance the activity of immunoagents. In Phasianus colchicus colchicus (Black-necked pheasant), this protein is Lysozyme C (LYZ).